The chain runs to 198 residues: Cytochrome c oxidase subunit 2 (198 aa).

Residues 1–13 (AICSLVLYLLTLM) form a helical membrane-spanning segment. Topologically, residues 14–26 (LMEKLSSNTVDAQ) are mitochondrial matrix. The chain crosses the membrane as a helical span at residues 27–54 (EVELIWTILPAIVLILLALPSLQILYMM). The Mitochondrial intermembrane segment spans residues 55–198 (DEIDEPDLTL…WSSLLSTSSL (144 aa)). 6 residues coordinate Cu cation: H128, C163, E165, C167, H171, and M174. E165 provides a ligand contact to Mg(2+).

It belongs to the cytochrome c oxidase subunit 2 family. Component of the cytochrome c oxidase (complex IV, CIV), a multisubunit enzyme composed of 14 subunits. The complex is composed of a catalytic core of 3 subunits MT-CO1, MT-CO2 and MT-CO3, encoded in the mitochondrial DNA, and 11 supernumerary subunits COX4I, COX5A, COX5B, COX6A, COX6B, COX6C, COX7A, COX7B, COX7C, COX8 and NDUFA4, which are encoded in the nuclear genome. The complex exists as a monomer or a dimer and forms supercomplexes (SCs) in the inner mitochondrial membrane with NADH-ubiquinone oxidoreductase (complex I, CI) and ubiquinol-cytochrome c oxidoreductase (cytochrome b-c1 complex, complex III, CIII), resulting in different assemblies (supercomplex SCI(1)III(2)IV(1) and megacomplex MCI(2)III(2)IV(2)). Found in a complex with TMEM177, COA6, COX18, COX20, SCO1 and SCO2. Interacts with TMEM177 in a COX20-dependent manner. Interacts with COX20. Interacts with COX16. Cu cation serves as cofactor.

It is found in the mitochondrion inner membrane. It carries out the reaction 4 Fe(II)-[cytochrome c] + O2 + 8 H(+)(in) = 4 Fe(III)-[cytochrome c] + 2 H2O + 4 H(+)(out). In terms of biological role, component of the cytochrome c oxidase, the last enzyme in the mitochondrial electron transport chain which drives oxidative phosphorylation. The respiratory chain contains 3 multisubunit complexes succinate dehydrogenase (complex II, CII), ubiquinol-cytochrome c oxidoreductase (cytochrome b-c1 complex, complex III, CIII) and cytochrome c oxidase (complex IV, CIV), that cooperate to transfer electrons derived from NADH and succinate to molecular oxygen, creating an electrochemical gradient over the inner membrane that drives transmembrane transport and the ATP synthase. Cytochrome c oxidase is the component of the respiratory chain that catalyzes the reduction of oxygen to water. Electrons originating from reduced cytochrome c in the intermembrane space (IMS) are transferred via the dinuclear copper A center (CU(A)) of subunit 2 and heme A of subunit 1 to the active site in subunit 1, a binuclear center (BNC) formed by heme A3 and copper B (CU(B)). The BNC reduces molecular oxygen to 2 water molecules using 4 electrons from cytochrome c in the IMS and 4 protons from the mitochondrial matrix. The sequence is that of Cytochrome c oxidase subunit 2 (MT-CO2) from Tinamus major (Great tinamou).